Consider the following 75-residue polypeptide: UPF0512 protein D (75 aa).

The tract at residues 1 to 20 is disordered; sequence MAIFKSISSISNSTGSMGSS.

Belongs to the UPF0512 family.

This is UPF0512 protein D from Dictyostelium discoideum (Social amoeba).